A 410-amino-acid polypeptide reads, in one-letter code: Lysosome-associated membrane glycoprotein 2 (410 aa).

The N-terminal stretch at 1-28 (MMCFRLSPVSGSGLVLSCLLLGAVQSYA) is a signal peptide. Residues 29-192 (FELNLPDSKA…SKEEFVCEED (164 aa)) form a first lumenal domain region. Residues 29–375 (FELNLPDSKA…QDCSADEDNF (347 aa)) lie on the Lumenal side of the membrane. An intrachain disulfide couples cysteine 40 to cysteine 79. N-linked (GlcNAc...) asparagine glycosylation is found at asparagine 48, asparagine 58, asparagine 71, asparagine 75, asparagine 99, asparagine 119, asparagine 123, asparagine 179, asparagine 222, asparagine 229, asparagine 242, asparagine 260, asparagine 275, asparagine 300, asparagine 307, asparagine 317, and asparagine 356. An intrachain disulfide couples cysteine 153 to cysteine 189. Residues 193–228 (KSVTTVRPIIHTTVPPPTTTPTPLPPKVGNYSVSNG) form a hinge region. A second lumenal domain region spans residues 229–375 (NATCLLATMG…QDCSADEDNF (147 aa)). An intrachain disulfide couples cysteine 232 to cysteine 265. The cysteines at positions 331 and 368 are disulfide-linked. The helical transmembrane segment at 376 to 399 (LVPIAVGAALAGVLALVLLAYFIG) threads the bilayer. Topologically, residues 400–410 (LKRHHTGYEQF) are cytoplasmic. Residues 401 to 404 (KRHH) form an important for binding and subsequent lysosomal degradation of target proteins region.

Belongs to the LAMP family. As to quaternary structure, monomer. Forms large homooligomers. Interacts (via its cytoplasmic region) with HSPA8; HSPA8 mediates recruitment of proteins with a KFERQ motif to the surface of the lysosome for chaperone-mediated autophagy. Interacts with HSP90 in the lysosome lumen; this enhances LAMP2 stability. Interacts with MLLT11. Interacts with ABCB9. Interacts with FURIN. Interacts with CT55; this interaction may be important for LAMP2 protein stability. Interacts with TMEM175; inhibiting the proton channel activity of TMEM175. Forms a ternary complex with RAB7A and RUFY4 (via RUN domain); the interaction with RAB7A is mediated by RUFY4 (via RUN and coiled coil domains). Post-translationally, extensively N-glycosylated. Contains a minor proportion of O-linked glycans.

The protein localises to the lysosome membrane. It localises to the endosome membrane. The protein resides in the cell membrane. Its subcellular location is the cytoplasmic vesicle. It is found in the autophagosome membrane. In terms of biological role, lysosomal membrane glycoprotein which plays an important role in lysosome biogenesis, lysosomal pH regulation and autophagy. Acts as an important regulator of lysosomal lumen pH regulation by acting as a direct inhibitor of the proton channel TMEM175, facilitating lysosomal acidification for optimal hydrolase activity. Plays an important role in chaperone-mediated autophagy, a process that mediates lysosomal degradation of proteins in response to various stresses and as part of the normal turnover of proteins with a long biological half-live. Functions by binding target proteins, such as GAPDH, NLRP3 and MLLT11, and targeting them for lysosomal degradation. In the chaperone-mediated autophagy, acts downstream of chaperones, such as HSPA8/HSC70, which recognize and bind substrate proteins and mediate their recruitment to lysosomes, where target proteins bind LAMP2. Plays a role in lysosomal protein degradation in response to starvation. Required for the fusion of autophagosomes with lysosomes during autophagy. Cells that lack LAMP2 express normal levels of VAMP8, but fail to accumulate STX17 on autophagosomes, which is the most likely explanation for the lack of fusion between autophagosomes and lysosomes. Required for normal degradation of the contents of autophagosomes. Required for efficient MHC class II-mediated presentation of exogenous antigens via its function in lysosomal protein degradation; antigenic peptides generated by proteases in the endosomal/lysosomal compartment are captured by nascent MHC II subunits. Is not required for efficient MHC class II-mediated presentation of endogenous antigens. This Cricetulus griseus (Chinese hamster) protein is Lysosome-associated membrane glycoprotein 2 (LAMP2).